The chain runs to 445 residues: NADH-quinone oxidoreductase subunit F (445 aa).

NAD(+) is bound at residue 61–70 (GRGGAGFSTG). Residue 174–221 (GAGRYICGEETALINSLEGRRANPRSKPPFPATSGAWGKPTCVNNVET) participates in FMN binding. 4 residues coordinate [4Fe-4S] cluster: Cys-351, Cys-354, Cys-357, and Cys-398.

Belongs to the complex I 51 kDa subunit family. Composed of 13 different subunits. Subunits NuoCD, E, F, and G constitute the peripheral sector of the complex. FMN is required as a cofactor. Requires [4Fe-4S] cluster as cofactor.

It carries out the reaction a quinone + NADH + 5 H(+)(in) = a quinol + NAD(+) + 4 H(+)(out). Functionally, NDH-1 shuttles electrons from NADH, via FMN and iron-sulfur (Fe-S) centers, to quinones in the respiratory chain. The immediate electron acceptor for the enzyme in this species is believed to be ubiquinone. Couples the redox reaction to proton translocation (for every two electrons transferred, four hydrogen ions are translocated across the cytoplasmic membrane), and thus conserves the redox energy in a proton gradient. This chain is NADH-quinone oxidoreductase subunit F (nuoF), found in Escherichia coli (strain K12).